Here is a 710-residue protein sequence, read N- to C-terminus: F-box only protein 40 (710 aa).

A TRAF-type zinc finger spans residues 53–114 (EHTLLCPLEQ…VDSETFLHEN (62 aa)). Disordered regions lie at residues 152 to 174 (DATE…GAVG) and 234 to 279 (GSLG…SQEL). Positions 238 to 248 (KSEDKNGDVAG) are enriched in basic and acidic residues. Residues 572–626 (LNSLTSLPLEVLQYIAGFLDSISLSQLSQVSVLMRNICATLLQERGMVLSQWKKK) form the F-box domain.

As to quaternary structure, directly interacts with SKP1 and CUL1. In terms of tissue distribution, expressed only in heart and skeletal muscle.

The protein localises to the cytoplasm. Probable substrate-recognition component of the SCF (SKP1-CUL1-F-box protein)-type E3 ubiquitin ligase complex that may function in myogenesis. This Mus musculus (Mouse) protein is F-box only protein 40 (Fbxo40).